A 295-amino-acid polypeptide reads, in one-letter code: Movement protein BC1 (295 aa).

It belongs to the begomovirus movement protein BC1 family. Binds to dimeric supercoiled plasmid DNA. In terms of processing, phosphorylated.

It localises to the host cell membrane. The protein resides in the host microsome membrane. Its subcellular location is the host endoplasmic reticulum membrane. Its function is as follows. Transports viral genome to neighboring plant cells directly through plasmosdesmata, without any budding. The movement protein allows efficient cell to cell propagation, by bypassing the host cell wall barrier. Begomovirus genome is shuttled out of nucleus by Nuclear shuttle protein (NSP) and the movement protein transports the DNA-NSP complex to cell plasmodesmata and facilitates further movement across the cell wall. The protein is Movement protein BC1 of Brassica oleracea (Wild cabbage).